An 81-amino-acid polypeptide reads, in one-letter code: Photosystem I iron-sulfur center (81 aa).

2 4Fe-4S ferredoxin-type domains span residues 2–31 and 39–68; these read SHFV…MIPW and IASA…VRVY. Cysteine 11, cysteine 14, cysteine 17, cysteine 21, cysteine 48, cysteine 51, cysteine 54, and cysteine 58 together coordinate [4Fe-4S] cluster.

The eukaryotic PSI reaction center is composed of at least 11 subunits. The cofactor is [4Fe-4S] cluster.

It localises to the plastid thylakoid membrane. It catalyses the reaction reduced [plastocyanin] + hnu + oxidized [2Fe-2S]-[ferredoxin] = oxidized [plastocyanin] + reduced [2Fe-2S]-[ferredoxin]. Functionally, apoprotein for the two 4Fe-4S centers FA and FB of photosystem I (PSI); essential for photochemical activity. FB is the terminal electron acceptor of PSI, donating electrons to ferredoxin. The C-terminus interacts with PsaA/B/D and helps assemble the protein into the PSI complex. Required for binding of PsaD and PsaE to PSI. PSI is a plastocyanin-ferredoxin oxidoreductase, converting photonic excitation into a charge separation, which transfers an electron from the donor P700 chlorophyll pair to the spectroscopically characterized acceptors A0, A1, FX, FA and FB in turn. This chain is Photosystem I iron-sulfur center, found in Cuscuta exaltata (Tall dodder).